Consider the following 2310-residue polypeptide: Peroxide stress-activated histidine kinase mak2 (2310 aa).

The 281-residue stretch at 12–292 folds into the Protein kinase domain; the sequence is DYAISQLGEF…SATDLCYTIV (281 aa). The 143-residue stretch at 1450–1592 folds into the GAF domain; sequence RLGPLLTTVI…LLSQQIAISV (143 aa). The 227-residue stretch at 1760–1986 folds into the Histidine kinase domain; sequence NMSHELRTPF…TFWFHVQLRN (227 aa). Histidine 1763 is modified (phosphohistidine; by autocatalysis). Residues 2180–2303 form the Response regulatory domain; sequence YALIAEDNLI…QLVNAVREFV (124 aa). Aspartate 2232 carries the post-translational modification 4-aspartylphosphate.

The protein resides in the cytoplasm. The catalysed reaction is ATP + protein L-histidine = ADP + protein N-phospho-L-histidine.. Functionally, involved in the control of the SAPK-dependent transcriptional response to peroxide stress. Regulates sty1 activity. The protein is Peroxide stress-activated histidine kinase mak2 (mak2) of Schizosaccharomyces pombe (strain 972 / ATCC 24843) (Fission yeast).